The sequence spans 364 residues: Developmentally-regulated GTP-binding protein 2 (364 aa).

Position 21 is a (3S)-3-hydroxylysine (Lys-21). In terms of domain architecture, OBG-type G spans 63-288; the sequence is ARVALIGFPS…LLEMLWEYLA (226 aa). GTP is bound by residues 69 to 76, 94 to 98, 115 to 118, 246 to 249, and 269 to 271; these read GFPSVGKS, FTTLT, DLPG, NKID, and SCG. Residues Ser-76 and Thr-96 each contribute to the Mg(2+) site. Residues 288–363 enclose the TGS domain; sequence ALTCIYTKKR…EHEDVIQIVK (76 aa).

It belongs to the TRAFAC class OBG-HflX-like GTPase superfamily. OBG GTPase family. Interacts with RWDD1; this interaction confers protection to polyubiquitination and proteolytic degradation. Interacts with JMJD7; this interaction is direct. The cofactor is Mg(2+). In terms of processing, polyubiquitinated. Hydroxylated (with S stereochemistry) at C-3 of Lys-21 by JMJD7. In terms of tissue distribution, fairly high levels in liver, heart, kidney, and brain. Very low levels in lung, spleen, testis and skeletal muscle.

The protein localises to the nucleus. It is found in the cytoplasm. The catalysed reaction is GTP + H2O = GDP + phosphate + H(+). Catalyzes the conversion of GTP to GDP through hydrolysis of the gamma-phosphate bond in GTP. When hydroxylated at C-3 of 'Lys-21' by JMJD7, may bind to RNA and play a role in translation. The chain is Developmentally-regulated GTP-binding protein 2 (Drg2) from Mus musculus (Mouse).